The following is a 170-amino-acid chain: Large ribosomal subunit protein uL10 (170 aa).

The protein belongs to the universal ribosomal protein uL10 family. As to quaternary structure, part of the ribosomal stalk of the 50S ribosomal subunit. The N-terminus interacts with L11 and the large rRNA to form the base of the stalk. The C-terminus forms an elongated spine to which L12 dimers bind in a sequential fashion forming a multimeric L10(L12)X complex.

In terms of biological role, forms part of the ribosomal stalk, playing a central role in the interaction of the ribosome with GTP-bound translation factors. In Corynebacterium urealyticum (strain ATCC 43042 / DSM 7109), this protein is Large ribosomal subunit protein uL10.